The chain runs to 487 residues: Transcriptional adapter ADA2b (487 aa).

The span at 1 to 13 (MGRSRGNFQNFED) shows a compositional bias: polar residues. Residues 1–25 (MGRSRGNFQNFEDPTQRTRKKKNAA) form a disordered region. Residues 42–98 (GGKYNCDYCQKDITGKIRIKCAVCPDFDLCIECMSVGAEITPHKCDHPYRVMGNLTF) form a ZZ-type zinc finger. Residues C47, C50, C62, C65, C71, C74, H84, and H88 each coordinate Zn(2+). One can recognise an SANT domain in the interval 100–152 (LICPDWSADDEMLLLEGLEIYGLGNWAEVAEHVGTKSKEQCLEHYRNIYLNSP). Position 216 is an N6-acetyllysine; by GCN5 (K216). The span at 368 to 383 (RKRKRENEEGMNRGKE) shows a compositional bias: basic and acidic residues. The disordered stretch occupies residues 368 to 388 (RKRKRENEEGMNRGKESGQFG). An SWIRM domain is found at 401-487 (QASSSYVNDL…MLVKKGIAQL (87 aa)).

Interacts in vitro with the HAT domain of GCN5 and with the DNA-binding domain of the transcriptional activator DREB1B/CBF1. Interacts with BZIP11. In terms of processing, acetylated in vitro by GCN5, but acetylation is not essential for biological activity. Expressed in roots, leaves, stems, flowers and siliques, with the strongest activity in the meristematic zones.

The protein localises to the nucleus. Functionally, required for the function of some acidic activation domains, which activate transcription from a distant site. The exact mechanism of action is not yet known. ADA2 stimulates the acetyltransferase activity of GCN5 on free histones or nucleosomes, probably by opening up the promoter region. Mediates auxin and cytokinin signals in the control of cell proliferation and might be involved in repression of a freezing tolerance pathway at warm temperature. Involved in the positive regulation of salt-induced gene expression by maintaining locus-specific acetylation of histones H4 and H3. The chain is Transcriptional adapter ADA2b (ADA2B) from Arabidopsis thaliana (Mouse-ear cress).